The chain runs to 1705 residues: Protein TIC 214 (1705 aa).

The next 5 helical transmembrane spans lie at 18–38, 67–87, 127–147, 175–195, and 218–238; these read IINSVVVVGLYYGFLTTFSIG, FITGQLIMFISIYYAPLHLAL, LSIQCVFLNNLIFQLLNHFIL, VGWIIGHILFMKWVGLLLVWI, and SMSMAGIFSIFLLVTCVHYLG.

Belongs to the TIC214 family. In terms of assembly, part of the Tic complex.

It is found in the plastid. Its subcellular location is the chloroplast inner membrane. In terms of biological role, involved in protein precursor import into chloroplasts. May be part of an intermediate translocation complex acting as a protein-conducting channel at the inner envelope. In Helianthus annuus (Common sunflower), this protein is Protein TIC 214.